We begin with the raw amino-acid sequence, 251 residues long: Probable transcriptional regulatory protein MAB_2888c (251 aa).

The segment at 1 to 20 is disordered; sequence MSGHSKWATTKHQKAVKDAR.

It belongs to the TACO1 family.

The protein localises to the cytoplasm. The sequence is that of Probable transcriptional regulatory protein MAB_2888c from Mycobacteroides abscessus (strain ATCC 19977 / DSM 44196 / CCUG 20993 / CIP 104536 / JCM 13569 / NCTC 13031 / TMC 1543 / L948) (Mycobacterium abscessus).